A 410-amino-acid chain; its full sequence is Gamma-glutamyl phosphate reductase (410 aa).

This sequence belongs to the gamma-glutamyl phosphate reductase family.

The protein localises to the cytoplasm. The enzyme catalyses L-glutamate 5-semialdehyde + phosphate + NADP(+) = L-glutamyl 5-phosphate + NADPH + H(+). Its pathway is amino-acid biosynthesis; L-proline biosynthesis; L-glutamate 5-semialdehyde from L-glutamate: step 2/2. Functionally, catalyzes the NADPH-dependent reduction of L-glutamate 5-phosphate into L-glutamate 5-semialdehyde and phosphate. The product spontaneously undergoes cyclization to form 1-pyrroline-5-carboxylate. The sequence is that of Gamma-glutamyl phosphate reductase from Sulfurimonas denitrificans (strain ATCC 33889 / DSM 1251) (Thiomicrospira denitrificans (strain ATCC 33889 / DSM 1251)).